The primary structure comprises 77 residues: uncharacterized protein (77 aa).

Disordered regions lie at residues 1 to 34 and 56 to 77; these read MSRA…TKMN and LDGD…FSGR. Residues 8 to 20 are compositionally biased toward basic and acidic residues; it reads DNDKGWAKKKGAD. The span at 25–34 shows a compositional bias: basic residues; it reads PRPHKQTKMN. The span at 56-70 shows a compositional bias: basic and acidic residues; the sequence is LDGDIRRGGNKKSER.

This is an uncharacterized protein from Dictyostelium discoideum (Social amoeba).